The chain runs to 2226 residues: Rotatin (2226 aa).

The disordered stretch occupies residues 295–346 (EARGPYHSPNPSPGSSSSRPSVVGRTGQRPRGDGQDWDAVSSSGSSSHTHVN). The span at 307–319 (PGSSSSRPSVVGR) shows a compositional bias: low complexity. S311 bears the Phosphoserine mark. K813 bears the N6-acetyllysine mark.

This sequence belongs to the rotatin family. Interacts with PPP1R35; this interaction allows the mutual recruitment to the centriole.

The protein resides in the cytoplasm. The protein localises to the cytoskeleton. It is found in the cilium basal body. Its function is as follows. Involved in the genetic cascade that governs left-right specification. Required for correct asymmetric expression of NODAL, LEFTY and PITX2. This chain is Rotatin, found in Mus musculus (Mouse).